The chain runs to 123 residues: MSNSNNDSRRRGLEMERRAADWLASHGLRLVDANQHARRGEIDLIMRDGDTLVFIEVRHRRDARHGHPFETVTAAKQRRLIGAARFYLHRNGLSCACRFDVVGVTGTPPHLSFEWIRSAFDAF.

The protein belongs to the UPF0102 family.

This chain is UPF0102 protein Csal_2201, found in Chromohalobacter salexigens (strain ATCC BAA-138 / DSM 3043 / CIP 106854 / NCIMB 13768 / 1H11).